Reading from the N-terminus, the 234-residue chain is MDYTPRLQPARLIKRYKRFLADVVTPEGETLTLHCANTGAMTGCATPGDTVWYSTSDNPKRKYPQSWELTETQQNHWICVNTLRANTLLYEALLENRIEELAGYSDIKTEVKYGTENSRIDLLLQAPDRIDCYIEVKSVTLLQHECGYFPDAVTLRGQKHLRELQQMVSNGKRAVLFFAVLHSGIQQVSPARHIDSRYAELFIEAQQAGVEILCYGSTLCPDGIKLTNKLPLLG.

It belongs to the SfsA family.

This chain is Sugar fermentation stimulation protein homolog, found in Pectobacterium atrosepticum (strain SCRI 1043 / ATCC BAA-672) (Erwinia carotovora subsp. atroseptica).